The following is a 193-amino-acid chain: Dense granule protein 2 (193 aa).

Asparagine 4 carries N-linked (GlcNAc...) asparagine glycosylation. The helical transmembrane segment at 14–34 (FSPLTVVMLAVTLVAFMGVPL) threads the bilayer. N-linked (GlcNAc...) asparagine glycosylation occurs at asparagine 74. Residues 75–140 (SSELAGSRDK…APKPVPVRSA (66 aa)) form a disordered region. The span at 88 to 98 (EAEEEAAEVET) shows a compositional bias: acidic residues. A helical membrane pass occupies residues 153–173 (HRVIGTAVIAAVVAALLWKFS). Positions 174–193 (RRRSGAPREGGENENGGEEK) are disordered.

It belongs to the Gra6 family.

It localises to the membrane. This is Dense granule protein 2 (DG2) from Neospora caninum (Coccidian parasite).